The following is a 781-amino-acid chain: Isoquinoline 1-oxidoreductase subunit beta (781 aa).

As to quaternary structure, heterodimer of an alpha chain and a beta chain.

The enzyme catalyses isoquinoline + A + H2O = isoquinolin-1(2H)-one + AH2. Specific towards N-containing N-heterocyclic substrates, including isoquinoline, isoquinolin-5-ol, phthalazine and quinazoline. This is Isoquinoline 1-oxidoreductase subunit beta (iorB) from Brevundimonas diminuta (Pseudomonas diminuta).